A 349-amino-acid polypeptide reads, in one-letter code: Anthranilate phosphoribosyltransferase (349 aa).

5-phospho-alpha-D-ribose 1-diphosphate-binding positions include glycine 82, 85-86, 92-95, 110-118, and serine 122; these read GD, NVST, and KHGNRAVSG. Position 82 (glycine 82) interacts with anthranilate. Serine 94 lines the Mg(2+) pocket. Asparagine 113 contributes to the anthranilate binding site. Arginine 168 provides a ligand contact to anthranilate. Mg(2+)-binding residues include aspartate 227 and glutamate 228.

Belongs to the anthranilate phosphoribosyltransferase family. As to quaternary structure, homodimer. It depends on Mg(2+) as a cofactor.

It catalyses the reaction N-(5-phospho-beta-D-ribosyl)anthranilate + diphosphate = 5-phospho-alpha-D-ribose 1-diphosphate + anthranilate. It functions in the pathway amino-acid biosynthesis; L-tryptophan biosynthesis; L-tryptophan from chorismate: step 2/5. Catalyzes the transfer of the phosphoribosyl group of 5-phosphorylribose-1-pyrophosphate (PRPP) to anthranilate to yield N-(5'-phosphoribosyl)-anthranilate (PRA). The polypeptide is Anthranilate phosphoribosyltransferase (Pseudomonas entomophila (strain L48)).